Consider the following 333-residue polypeptide: L-lactate dehydrogenase B chain (333 aa).

NAD(+)-binding positions include 29–57 (GQVG…LEDK) and Arg99. Residues Arg106, Asn138, and Arg169 each contribute to the substrate site. An NAD(+)-binding site is contributed by Asn138. His193 functions as the Proton acceptor in the catalytic mechanism. A substrate-binding site is contributed by Thr248.

The protein belongs to the LDH/MDH superfamily. LDH family. In terms of assembly, homotetramer.

The protein resides in the cytoplasm. The enzyme catalyses (S)-lactate + NAD(+) = pyruvate + NADH + H(+). The protein operates within fermentation; pyruvate fermentation to lactate; (S)-lactate from pyruvate: step 1/1. In terms of biological role, interconverts simultaneously and stereospecifically pyruvate and lactate with concomitant interconversion of NADH and NAD(+). The protein is L-lactate dehydrogenase B chain (LDHB) of Anas platyrhynchos (Mallard).